The chain runs to 206 residues: ATP-dependent Clp protease proteolytic subunit (206 aa).

Ser-108 acts as the Nucleophile in catalysis. His-133 is a catalytic residue.

Belongs to the peptidase S14 family. In terms of assembly, fourteen ClpP subunits assemble into 2 heptameric rings which stack back to back to give a disk-like structure with a central cavity, resembling the structure of eukaryotic proteasomes.

The protein localises to the cytoplasm. The catalysed reaction is Hydrolysis of proteins to small peptides in the presence of ATP and magnesium. alpha-casein is the usual test substrate. In the absence of ATP, only oligopeptides shorter than five residues are hydrolyzed (such as succinyl-Leu-Tyr-|-NHMec, and Leu-Tyr-Leu-|-Tyr-Trp, in which cleavage of the -Tyr-|-Leu- and -Tyr-|-Trp bonds also occurs).. Its function is as follows. Cleaves peptides in various proteins in a process that requires ATP hydrolysis. Has a chymotrypsin-like activity. Plays a major role in the degradation of misfolded proteins. The protein is ATP-dependent Clp protease proteolytic subunit of Chromohalobacter salexigens (strain ATCC BAA-138 / DSM 3043 / CIP 106854 / NCIMB 13768 / 1H11).